The chain runs to 89 residues: uncharacterized protein (89 aa).

This is an uncharacterized protein from Klebsiella aerogenes (Enterobacter aerogenes).